The chain runs to 281 residues: Probable endonuclease 4 (281 aa).

9 residues coordinate Zn(2+): histidine 68, histidine 108, glutamate 145, aspartate 179, histidine 182, histidine 216, aspartate 229, histidine 231, and glutamate 261.

The protein belongs to the AP endonuclease 2 family. Requires Zn(2+) as cofactor.

The catalysed reaction is Endonucleolytic cleavage to 5'-phosphooligonucleotide end-products.. Endonuclease IV plays a role in DNA repair. It cleaves phosphodiester bonds at apurinic or apyrimidinic (AP) sites, generating a 3'-hydroxyl group and a 5'-terminal sugar phosphate. The chain is Probable endonuclease 4 from Trichlorobacter lovleyi (strain ATCC BAA-1151 / DSM 17278 / SZ) (Geobacter lovleyi).